The primary structure comprises 296 residues: Maltose/maltodextrin transport system permease protein MalG (296 aa).

Over 1 to 12 the chain is Cytoplasmic; the sequence is MAMVQPKSQKAR. A helical membrane pass occupies residues 13-35; it reads LFITHLLLLLFIAAIMFPLLMVV. The Periplasmic segment spans residues 36-88; that stretch reads AISLRQGNFATGSLIPEQISWDHWKLALGFSVEQADGRITPPPFPVLLWLWNS. The ABC transmembrane type-1 domain occupies 85–281; it reads LWNSVKVAGI…LPITIVFLLA (197 aa). A helical transmembrane segment spans residues 89 to 111; the sequence is VKVAGISAIGIVALSTTCAYAFA. The Cytoplasmic portion of the chain corresponds to 112-123; it reads RMRFPGKATLLK. Residues 124 to 143 form a helical membrane-spanning segment; it reads GMLIFQMFPAVLSLVALYAL. Topologically, residues 144–152 are periplasmic; sequence FDRLGEYIP. A helical membrane pass occupies residues 153 to 175; it reads FIGLNTHGGVIFAYLGGIALHVW. Topologically, residues 176–204 are cytoplasmic; it reads TIKGYFETIDSSLEEAAALDGATPWQAFR. Residues 205-227 traverse the membrane as a helical segment; it reads LVLLPLSVPILAVVFILSFIAAI. Residues 228–257 lie on the Periplasmic side of the membrane; the sequence is TEVPVASLLLRDVNSYTLAVGMQQYLNPQN. The chain crosses the membrane as a helical span at residues 258–280; it reads YLWGDFAAAAVMSALPITIVFLL. The Cytoplasmic segment spans residues 281–296; it reads AQRWLVNGLTAGGVKG.

The protein belongs to the binding-protein-dependent transport system permease family. MalFG subfamily. In terms of assembly, the complex is composed of two ATP-binding proteins (MalK), two transmembrane proteins (MalG and MalF) and a solute-binding protein (MalE).

It is found in the cell inner membrane. Part of the ABC transporter complex MalEFGK involved in maltose/maltodextrin import. Probably responsible for the translocation of the substrate across the membrane. This Escherichia coli O157:H7 protein is Maltose/maltodextrin transport system permease protein MalG (malG).